A 158-amino-acid chain; its full sequence is NAD(P)H-quinone oxidoreductase subunit J, chloroplastic (158 aa).

This sequence belongs to the complex I 30 kDa subunit family. As to quaternary structure, NDH is composed of at least 16 different subunits, 5 of which are encoded in the nucleus.

The protein resides in the plastid. It is found in the chloroplast thylakoid membrane. It catalyses the reaction a plastoquinone + NADH + (n+1) H(+)(in) = a plastoquinol + NAD(+) + n H(+)(out). The enzyme catalyses a plastoquinone + NADPH + (n+1) H(+)(in) = a plastoquinol + NADP(+) + n H(+)(out). NDH shuttles electrons from NAD(P)H:plastoquinone, via FMN and iron-sulfur (Fe-S) centers, to quinones in the photosynthetic chain and possibly in a chloroplast respiratory chain. The immediate electron acceptor for the enzyme in this species is believed to be plastoquinone. Couples the redox reaction to proton translocation, and thus conserves the redox energy in a proton gradient. The polypeptide is NAD(P)H-quinone oxidoreductase subunit J, chloroplastic (Ceratophyllum demersum (Rigid hornwort)).